Reading from the N-terminus, the 439-residue chain is GTPase Der (439 aa).

2 consecutive EngA-type G domains span residues 2 to 166 (SVVA…PAPA) and 176 to 351 (TRLA…IEFN). Residues 8-15 (GRPNVGKS), 55-59 (DTGGF), 118-121 (NKVD), 182-189 (GRPNVGKS), 229-233 (DTAGI), and 294-297 (NKWD) contribute to the GTP site. The KH-like domain occupies 352-436 (RQVPTGVLNR…PIRLKFKDRN (85 aa)).

This sequence belongs to the TRAFAC class TrmE-Era-EngA-EngB-Septin-like GTPase superfamily. EngA (Der) GTPase family. As to quaternary structure, associates with the 50S ribosomal subunit.

Its function is as follows. GTPase that plays an essential role in the late steps of ribosome biogenesis. This chain is GTPase Der, found in Syntrophotalea carbinolica (strain DSM 2380 / NBRC 103641 / GraBd1) (Pelobacter carbinolicus).